The sequence spans 258 residues: Serine protease VLSP-3 (258 aa).

Positions 1 to 18 are cleaved as a signal peptide; sequence MVLIRVLANLLVLQLSYA. A propeptide spanning residues 19-24 is cleaved from the precursor; it reads QKSSEL. The Peptidase S1 domain maps to 25-249; that stretch reads VIGGDECNIN…YTDWIQSIIA (225 aa). Disulfide bonds link cysteine 31-cysteine 163, cysteine 50-cysteine 66, cysteine 98-cysteine 256, cysteine 142-cysteine 210, cysteine 174-cysteine 189, and cysteine 200-cysteine 225. N-linked (GlcNAc...) asparagine glycosylation is present at asparagine 44. Catalysis depends on histidine 65, which acts as the Charge relay system. Residues asparagine 79 and asparagine 103 are each glycosylated (N-linked (GlcNAc...) asparagine). Catalysis depends on aspartate 110, which acts as the Charge relay system. 2 N-linked (GlcNAc...) asparagine glycosylation sites follow: asparagine 154 and asparagine 170. The active-site Charge relay system is the serine 204. N-linked (GlcNAc...) asparagine glycosylation occurs at asparagine 251.

This sequence belongs to the peptidase S1 family. Snake venom subfamily. In terms of assembly, monomer. Expressed by the venom gland.

The protein resides in the secreted. Functionally, snake venom serine protease that may act in the hemostasis system of the prey. This chain is Serine protease VLSP-3, found in Macrovipera lebetinus (Levantine viper).